The chain runs to 774 residues: RNA exonuclease 5 (774 aa).

The segment covering 1–19 (MEPEREGTERHPRKVRESR) has biased composition (basic and acidic residues). The tract at residues 1 to 22 (MEPEREGTERHPRKVRESRQAP) is disordered. In terms of domain architecture, Exonuclease spans 228 to 376 (LFGLDCEMCL…EDARTILELA (149 aa)). 2 RRM domains span residues 505–579 (STVY…RPVT) and 600–679 (GSIY…RHLH).

This chain is RNA exonuclease 5, found in Homo sapiens (Human).